A 356-amino-acid polypeptide reads, in one-letter code: Glycerophosphodiester phosphodiesterase (356 aa).

Positions 1-20 (MRGTYCVTLWGGVFAALVAG) are cleaved as a signal peptide. A lipid anchor (N-palmitoyl cysteine) is attached at C21. C21 carries the S-diacylglycerol cysteine lipid modification. The GP-PDE domain occupies 25 to 314 (RMIVAYRGAA…CHVHTVRKET (290 aa)).

Belongs to the glycerophosphoryl diester phosphodiesterase family. Palmitoylated upon expression of a fusion protein with first 40 residues fused to PhoA in E.coli.

It is found in the cell inner membrane. It catalyses the reaction a sn-glycero-3-phosphodiester + H2O = an alcohol + sn-glycerol 3-phosphate + H(+). Functionally, glycerophosphoryl diester phosphodiesterase hydrolyzes deacylated phospholipids to G3P and the corresponding alcohols. Its function is as follows. Binds human IgA, IgD and the Fc portion of IgG but not IgM, which may contribute to evasion of the human immune system. The polypeptide is Glycerophosphodiester phosphodiesterase (glpQ) (Treponema pallidum (strain Nichols)).